The primary structure comprises 73 residues: ATP synthase subunit 9, mitochondrial (73 aa).

Helical transmembrane passes span 12–32 (VAAL…AALI) and 50–70 (ILGF…SFLL).

Belongs to the ATPase C chain family. F-type ATPases have 2 components, CF(1) - the catalytic core - and CF(0) - the membrane proton channel. CF(1) has five subunits: alpha(3), beta(3), gamma(1), delta(1), epsilon(1). CF(0) has three main subunits: a, b and c.

The protein localises to the mitochondrion inner membrane. Its function is as follows. Mitochondrial membrane ATP synthase (F(1)F(0) ATP synthase or Complex V) produces ATP from ADP in the presence of a proton gradient across the membrane which is generated by electron transport complexes of the respiratory chain. F-type ATPases consist of two structural domains, F(1) - containing the extramembraneous catalytic core and F(0) - containing the membrane proton channel, linked together by a central stalk and a peripheral stalk. During catalysis, ATP synthesis in the catalytic domain of F(1) is coupled via a rotary mechanism of the central stalk subunits to proton translocation. Part of the complex F(0) domain. A homomeric c-ring of probably 10 subunits is part of the complex rotary element. In Mycosarcoma maydis (Corn smut fungus), this protein is ATP synthase subunit 9, mitochondrial (ATP9).